The following is a 426-amino-acid chain: Serine--tRNA ligase (426 aa).

Position 230–232 (230–232 (TAE)) interacts with L-serine. 261 to 263 (RSE) is an ATP binding site. Glu-284 is a binding site for L-serine. 348–351 (EISS) serves as a coordination point for ATP. Ser-384 is a binding site for L-serine.

It belongs to the class-II aminoacyl-tRNA synthetase family. Type-1 seryl-tRNA synthetase subfamily. Homodimer. The tRNA molecule binds across the dimer.

Its subcellular location is the cytoplasm. It catalyses the reaction tRNA(Ser) + L-serine + ATP = L-seryl-tRNA(Ser) + AMP + diphosphate + H(+). The enzyme catalyses tRNA(Sec) + L-serine + ATP = L-seryl-tRNA(Sec) + AMP + diphosphate + H(+). It participates in aminoacyl-tRNA biosynthesis; selenocysteinyl-tRNA(Sec) biosynthesis; L-seryl-tRNA(Sec) from L-serine and tRNA(Sec): step 1/1. Functionally, catalyzes the attachment of serine to tRNA(Ser). Is also able to aminoacylate tRNA(Sec) with serine, to form the misacylated tRNA L-seryl-tRNA(Sec), which will be further converted into selenocysteinyl-tRNA(Sec). This Streptococcus mutans serotype c (strain ATCC 700610 / UA159) protein is Serine--tRNA ligase.